Consider the following 1712-residue polypeptide: Latent-transforming growth factor beta-binding protein 1 (1712 aa).

A signal peptide spans 1–23 (MAGAWLRWGLLLWAGLLAWSAHG). The interval 65–118 (TAASSRALAGPPAERTRRTSQPGGAALPGLRSPLPPEPARPGGPSRQLHSKAGA) is disordered. Residues 181-213 (TKPSCVPPCQNGGMCLRPQLCVCKPGSKGKACE) enclose the EGF-like 1 domain. 3 disulfides stabilise this stretch: cysteine 185-cysteine 195, cysteine 189-cysteine 201, and cysteine 203-cysteine 212. N-linked (GlcNAc...) asparagine glycans are attached at residues asparagine 339 and asparagine 370. Positions 391 to 423 (RVVICHLPCMNGGQCSSRDKCQCPPNFTGKLCQ) constitute an EGF-like 2 domain. Intrachain disulfides connect cysteine 395–cysteine 405, cysteine 399–cysteine 411, cysteine 413–cysteine 422, cysteine 551–cysteine 573, cysteine 560–cysteine 586, and cysteine 574–cysteine 589. N-linked (GlcNAc...) asparagine glycosylation occurs at asparagine 416. The region spanning 549-601 (GRCFQETIGSQCGKALPGLSKQEDCCGTVGTSWGFNKCQKCPKKQSYHGYTQM) is the TB 1 domain. Asparagine 612 carries N-linked (GlcNAc...) asparagine glycosylation. The 41-residue stretch at 618-658 (DINECQLQGVCPNGECLNTMGSYRCSCKMGFGPDPTFSSCV) folds into the EGF-like 3; calcium-binding domain. Intrachain disulfides connect cysteine 622–cysteine 633, cysteine 628–cysteine 642, cysteine 644–cysteine 657, cysteine 671–cysteine 694, cysteine 681–cysteine 706, cysteine 695–cysteine 709, and cysteine 696–cysteine 721. Serine 639 carries an O-linked (Glc) serine glycan. Positions 669 to 721 (GPCYRLVSPGRHCMHPLSVHLTKQICCCSVGKAWGPHCEKCPLPGTAAFKEIC) constitute a TB 2 domain. Residues 753–799 (NTQPVAKSTHPPPLPAKEEPVEALTSSWEHGPRGAEPEVVTAPPEKE) are disordered. O-linked (GalNAc...) threonine glycosylation is found at threonine 761 and threonine 793. The 42-residue stretch at 865 to 906 (EINECTVNPDICGAGHCINLPVRYTCICYEGYKFSEQLRKCV) folds into the EGF-like 4; calcium-binding domain. 37 disulfide bridges follow: cysteine 869–cysteine 881, cysteine 876–cysteine 890, cysteine 892–cysteine 905, cysteine 911–cysteine 923, cysteine 918–cysteine 932, cysteine 934–cysteine 947, cysteine 953–cysteine 964, cysteine 959–cysteine 973, cysteine 976–cysteine 988, cysteine 994–cysteine 1005, cysteine 1000–cysteine 1014, cysteine 1017–cysteine 1028, cysteine 1034–cysteine 1045, cysteine 1040–cysteine 1054, cysteine 1056–cysteine 1069, cysteine 1075–cysteine 1086, cysteine 1081–cysteine 1095, cysteine 1097–cysteine 1110, cysteine 1116–cysteine 1127, cysteine 1122–cysteine 1136, cysteine 1138–cysteine 1151, cysteine 1157–cysteine 1169, cysteine 1164–cysteine 1178, cysteine 1180–cysteine 1192, cysteine 1198–cysteine 1210, cysteine 1204–cysteine 1219, cysteine 1221–cysteine 1234, cysteine 1240–cysteine 1252, cysteine 1246–cysteine 1261, cysteine 1263–cysteine 1276, cysteine 1282–cysteine 1294, cysteine 1289–cysteine 1303, cysteine 1305–cysteine 1319, cysteine 1340–cysteine 1363, cysteine 1350–cysteine 1375, cysteine 1364–cysteine 1380, and cysteine 1365–cysteine 1392. An EGF-like 5; calcium-binding domain is found at 907-948 (DIDECAQVRHLCSQGRCENTEGSFLCVCPAGFMASEEGTNCI). An O-linked (Glc) serine glycan is attached at serine 929. The 41-residue stretch at 949–989 (DVDECLRPDMCRDGRCINTAGAFRCEYCDSGYRMSRRGYCE) folds into the EGF-like 6; calcium-binding domain. The residue at position 966 (asparagine 966) is a (3R)-3-hydroxyasparagine. The EGF-like 7; calcium-binding domain occupies 990-1029 (DIDECLKPSTCPEEQCVNTPGSYQCVPCTEGFRGWNGQCL). An O-linked (Glc) serine glycan is attached at serine 1011. The region spanning 1030–1070 (DVDECLQPKVCTNGSCTNLEGSYMCSCHRGYSPTPDHRHCQ) is the EGF-like 8; calcium-binding domain. The N-linked (GlcNAc...) asparagine glycan is linked to asparagine 1042. Serine 1051 carries O-linked (Glc) serine glycosylation. Residues 1071-1111 (DIDECQQGNLCMNGQCRNTDGSFRCTCGQGYQLSAAKDQCE) form the EGF-like 9; calcium-binding domain. Residues 1112 to 1152 (DIDECEHHHLCSHGQCRNTEGSFQCVCNQGYRASVLGDHCE) enclose the EGF-like 10; calcium-binding domain. A (3R)-3-hydroxyasparagine modification is found at asparagine 1129. Serine 1133 is a glycosylation site (O-linked (Glc) serine). The EGF-like 11; calcium-binding domain occupies 1153–1193 (DINECLEDSSVCQGGDCINTAGSYDCTCPDGFQLNDNKGCQ). The EGF-like 12; calcium-binding domain maps to 1194–1235 (DINECAQPGLCGSHGECLNTQGSFHCVCEQGFSISADGRTCE). O-linked (Glc) serine glycosylation is present at serine 1216. In terms of domain architecture, EGF-like 13; calcium-binding spans 1236 to 1277 (DIDECVNNTVCDSHGFCDNTAGSFRCLCYQGFQAPQDGQGCV). Asparagine 1242 carries an N-linked (GlcNAc...) asparagine glycan. One can recognise an EGF-like 14; calcium-binding domain in the interval 1278 to 1320 (DVNECELLSGVCGEAFCENVEGSFLCVCADENQEYSPMTGQCR). Residues 1335–1402 (EEKKECYYNL…PRGKGLVPAG (68 aa)) form an 8-Cys3 region region. In terms of domain architecture, TB 3 spans 1338-1392 (KECYYNLNDASLCDNVLAPNVTKQECCCTSGAGWGDNCEIFPCPVQGTAEFTEMC). Asparagine 1357 carries an N-linked (GlcNAc...) asparagine glycan. Serine 1405 bears the Phosphoserine mark. An EGF-like 15; calcium-binding domain is found at 1415-1457 (DADECLLFGEEICKNGYCLNTQPGYECYCKQGTYYDPVKLQCF). 10 cysteine pairs are disulfide-bonded: cysteine 1419-cysteine 1432, cysteine 1427-cysteine 1441, cysteine 1443-cysteine 1456, cysteine 1462-cysteine 1473, cysteine 1468-cysteine 1482, cysteine 1484-cysteine 1497, cysteine 1517-cysteine 1541, cysteine 1527-cysteine 1553, cysteine 1542-cysteine 1556, and cysteine 1543-cysteine 1568. The 41-residue stretch at 1458 to 1498 (DMDECQDPNSCIDGQCVNTEGSYNCFCTHPMVLDASEKRCV) folds into the EGF-like 16; calcium-binding domain. Residue serine 1479 is glycosylated (O-linked (Glc) serine). Residues 1498–1712 (VQPTESNEQI…LNLDKESDLE (215 aa)) form a C-terminal domain region. The region spanning 1515 to 1568 (DLCWEHLSEEYVCSRPLVGKQTTYTECCCLYGEAWGMQCALCPMKDSDDYAQLC) is the TB 4 domain. Residues serine 1588 and serine 1607 each carry the phosphoserine modification. Positions 1612-1652 (QAEECGILNGCENGRCVRVQEGYTCDCFDGYHLDMAKMTCV) constitute an EGF-like 17 domain. 6 disulfides stabilise this stretch: cysteine 1616–cysteine 1627, cysteine 1622–cysteine 1636, cysteine 1638–cysteine 1651, cysteine 1657–cysteine 1672, cysteine 1667–cysteine 1681, and cysteine 1683–cysteine 1696. An EGF-like 18; calcium-binding domain is found at 1653–1697 (DVNECSELNNRMSLCKNAKCINTEGSYKCLCLPGYIPSDKPNYCT). An O-linked (Glc) serine glycan is attached at serine 1678.

The protein belongs to the LTBP family. As to quaternary structure, interacts with TGFB1; associates via disulfide bonds with the Latency-associated peptide chain (LAP) regulatory chain of TGFB1, leading to regulate activation of TGF-beta-1. LTBP1 does not bind directly to TGF-beta-1, the active chain of TGFB1. Interacts (via C-terminal domain) with FBN1 (via N-terminal domain). Interacts with FBN2. Interacts with ADAMTSL2. Interacts with EFEMP2. Contains hydroxylated asparagine residues. Post-translationally, two intrachain disulfide bonds from the TB3 domain are rearranged upon TGFB1 binding, and form interchain bonds with TGFB1 propeptide, anchoring it to the extracellular matrix. In terms of processing, O-glycosylated on serine residues by POGLUT2 and POGLUT3.

Its subcellular location is the secreted. It is found in the extracellular space. The protein resides in the extracellular matrix. Functionally, key regulator of transforming growth factor beta (TGFB1, TGFB2 and TGFB3) that controls TGF-beta activation by maintaining it in a latent state during storage in extracellular space. Associates specifically via disulfide bonds with the Latency-associated peptide (LAP), which is the regulatory chain of TGF-beta, and regulates integrin-dependent activation of TGF-beta. Outcompeted by LRRC32/GARP for binding to LAP regulatory chain of TGF-beta. The sequence is that of Latent-transforming growth factor beta-binding protein 1 from Mus musculus (Mouse).